A 522-amino-acid chain; its full sequence is Transactivator/viroplasmin protein (522 aa).

The segment at 488-522 (DASADEGTTDKSGPPPTRSIVEKEDVPNTSSKQVD) is disordered.

Belongs to the caulimoviridae viroplasmin family.

The protein localises to the host cytoplasm. Functionally, enhances the ribosomal termination-reinitiation event leading to the translation of major open reading frames on the polycistronic viral RNAs. The protein is Transactivator/viroplasmin protein of Cauliflower mosaic virus (strain D/H) (CaMV).